The chain runs to 537 residues: Putative cysteine ligase BshC (537 aa).

Residues 422 to 450 adopt a coiled-coil conformation; that stretch reads IEKVEGMIEQQRRLNKDLLDEVAGNQNNI.

The protein belongs to the BshC family.

Functionally, involved in bacillithiol (BSH) biosynthesis. May catalyze the last step of the pathway, the addition of cysteine to glucosamine malate (GlcN-Mal) to generate BSH. The polypeptide is Putative cysteine ligase BshC (Staphylococcus aureus (strain USA300)).